The chain runs to 696 residues: Spermatogenesis-associated protein 21 (696 aa).

Disordered regions lie at residues 1–301 (MDNR…AAGT) and 329–386 (LKAR…SVPT). Over residues 67-86 (KGPRYRDTFKEGPSELRTQE) the composition is skewed to basic and acidic residues. The segment covering 96-116 (KQSSWVPQEGSQELQAGQDQS) has biased composition (polar residues). Residues 195-209 (GDKRPKEADVPHIRP) show a composition bias toward basic and acidic residues. Residues 223–235 (DSSQEAMPPTSTV) show a composition bias toward polar residues. The segment covering 275 to 287 (EVRDIGERREPDR) has biased composition (basic and acidic residues). Composition is skewed to low complexity over residues 288-297 (VQQQPQKPVV) and 339-366 (SPRTLTPVPTSSPSLPQTPASAPASGPS). The stretch at 424-451 (EPEEQSLQKLYQNREKSEEQLTLKQEEA) forms a coiled coil. The EF-hand domain occupies 481–516 (VTPAQVEDALMSADVNGDGHVDFKDFLAVMTDTRRF). Asp-494, Asn-496, Asp-498, His-500, and Asp-505 together coordinate Ca(2+). Residues 646–696 (KPTNHYVQDQCTTPGLAPDIRSPFFQSRSQGNREHNSDSRKWPSSVPSRTH) are disordered. Residues 676–686 (GNREHNSDSRK) are compositionally biased toward basic and acidic residues.

Involved in the differentiation of haploid spermatids. The protein is Spermatogenesis-associated protein 21 (SPATA21) of Macaca fascicularis (Crab-eating macaque).